The following is a 495-amino-acid chain: Cobyric acid synthase (495 aa).

Residues 249–443 (EININVIRLP…LHGLFDNGAW (195 aa)) form the GATase cobBQ-type domain. Catalysis depends on cysteine 330, which acts as the Nucleophile. Histidine 435 is a catalytic residue.

Belongs to the CobB/CobQ family. CobQ subfamily.

It functions in the pathway cofactor biosynthesis; adenosylcobalamin biosynthesis. In terms of biological role, catalyzes amidations at positions B, D, E, and G on adenosylcobyrinic A,C-diamide. NH(2) groups are provided by glutamine, and one molecule of ATP is hydrogenolyzed for each amidation. The chain is Cobyric acid synthase from Gloeothece citriformis (strain PCC 7424) (Cyanothece sp. (strain PCC 7424)).